Reading from the N-terminus, the 215-residue chain is Vesicle-trafficking protein SEC22b (215 aa).

Topologically, residues 1–190 are cytoplasmic; it reads MVLLTMIARV…RQDAKYLNMR (190 aa). In terms of domain architecture, Longin spans 6 to 119; that stretch reads MIARVADGLP…YSFIEFDNYI (114 aa). Positions 134–194 constitute a v-SNARE coiled-coil homology domain; sequence NLSSVNTELQ…KYLNMRSTYA (61 aa). The chain crosses the membrane as a helical span at residues 191 to 213; sequence STYAKLAAVAVFSVMLIVYIRFW. Residues 214–215 lie on the Lumenal side of the membrane; that stretch reads WL.

Belongs to the synaptobrevin family. In terms of assembly, component of 2 distinct SNARE complexes.

It localises to the endoplasmic reticulum membrane. Its subcellular location is the endoplasmic reticulum-Golgi intermediate compartment membrane. It is found in the golgi apparatus. The protein localises to the cis-Golgi network membrane. The protein resides in the trans-Golgi network membrane. It localises to the melanosome. In terms of biological role, SNARE involved in targeting and fusion of ER-derived transport vesicles with the Golgi complex as well as Golgi-derived retrograde transport vesicles with the ER. The sequence is that of Vesicle-trafficking protein SEC22b from Xenopus tropicalis (Western clawed frog).